Here is a 146-residue protein sequence, read N- to C-terminus: 3-hydroxyacyl-[acyl-carrier-protein] dehydratase FabZ (146 aa).

The active site involves His49.

It belongs to the thioester dehydratase family. FabZ subfamily.

Its subcellular location is the cytoplasm. The catalysed reaction is a (3R)-hydroxyacyl-[ACP] = a (2E)-enoyl-[ACP] + H2O. Its function is as follows. Involved in unsaturated fatty acids biosynthesis. Catalyzes the dehydration of short chain beta-hydroxyacyl-ACPs and long chain saturated and unsaturated beta-hydroxyacyl-ACPs. This is 3-hydroxyacyl-[acyl-carrier-protein] dehydratase FabZ from Pseudomonas aeruginosa (strain LESB58).